A 342-amino-acid chain; its full sequence is N-alpha-acetyl-L-2,4-diaminobutyric acid deacetylase (342 aa).

Residues 103-124 (TAGRRTSPMDGGNLNRSFPGDP) are disordered.

This sequence belongs to the DoeB deacetylase family. The cofactor is Zn(2+).

The protein resides in the cytoplasm. The enzyme catalyses (2S)-2-acetamido-4-aminobutanoate + H2O = L-2,4-diaminobutanoate + acetate. Functionally, involved in the degradation of ectoine, which allows H.elongata to utilize ectoine as both a carbon and a nitrogen source for growth. Catalyzes the deacetylation of N-alpha-acetyl-L-2,4-diaminobutyrate (N-alpha-Ac-DABA) to yield L-2,4-diaminobutyrate (DABA). The chain is N-alpha-acetyl-L-2,4-diaminobutyric acid deacetylase from Halomonas elongata (strain ATCC 33173 / DSM 2581 / NBRC 15536 / NCIMB 2198 / 1H9).